The primary structure comprises 58 residues: Small ribosomal subunit protein bS21 (58 aa).

The segment at 30-58 is disordered; the sequence is SEVRKREHYEKPSVKRKKKSEAARKRKFK. Residues 31–42 are compositionally biased toward basic and acidic residues; the sequence is EVRKREHYEKPS. Residues 43-58 are compositionally biased toward basic residues; sequence VKRKKKSEAARKRKFK.

Belongs to the bacterial ribosomal protein bS21 family.

This is Small ribosomal subunit protein bS21 from Clostridium perfringens (strain ATCC 13124 / DSM 756 / JCM 1290 / NCIMB 6125 / NCTC 8237 / Type A).